Here is a 241-residue protein sequence, read N- to C-terminus: Peroxisomal membrane protein 11C (241 aa).

Topologically, residues 1–122 (MALLNRLASA…ADAKVLRVDS (122 aa)) are cytoplasmic. A helical transmembrane segment spans residues 123-149 (AWWWTLNTALWTLSLLLGAVKALWTML). Topologically, residues 150-211 (KLRQKLRSPT…GVLWAGRFPP (62 aa)) are lumenal. A helical membrane pass occupies residues 212–227 (WLVGLMGTISSILSTC). Over 228–241 (QAVRAGRQAEADSP) the chain is Cytoplasmic.

The protein belongs to the peroxin-11 family. Homodimer. Heterodimer with either PEX11A or PEX11B. Interacts with FIS1. Expressed in liver and at much lower levels in heart, kidney and testis.

The protein localises to the peroxisome membrane. Promotes membrane protrusion and elongation on the peroxisomal surface. The chain is Peroxisomal membrane protein 11C (Pex11g) from Mus musculus (Mouse).